A 173-amino-acid polypeptide reads, in one-letter code: Shikimate kinase 1 (173 aa).

14-19 contacts ATP; the sequence is GAGKST. Ser18 contributes to the Mg(2+) binding site. Substrate is bound by residues Asp36, Arg60, and Gly82. Residue Arg120 participates in ATP binding. Arg140 provides a ligand contact to substrate. Gln157 provides a ligand contact to ATP.

This sequence belongs to the shikimate kinase family. As to quaternary structure, monomer. Mg(2+) serves as cofactor.

It is found in the cytoplasm. The enzyme catalyses shikimate + ATP = 3-phosphoshikimate + ADP + H(+). Its pathway is metabolic intermediate biosynthesis; chorismate biosynthesis; chorismate from D-erythrose 4-phosphate and phosphoenolpyruvate: step 5/7. In terms of biological role, catalyzes the specific phosphorylation of the 3-hydroxyl group of shikimic acid using ATP as a cosubstrate. This chain is Shikimate kinase 1, found in Erwinia tasmaniensis (strain DSM 17950 / CFBP 7177 / CIP 109463 / NCPPB 4357 / Et1/99).